A 222-amino-acid polypeptide reads, in one-letter code: Peptide methionine sulfoxide reductase MsrA 1 (222 aa).

Cysteine 57 is an active-site residue.

Belongs to the MsrA Met sulfoxide reductase family.

It catalyses the reaction L-methionyl-[protein] + [thioredoxin]-disulfide + H2O = L-methionyl-(S)-S-oxide-[protein] + [thioredoxin]-dithiol. The catalysed reaction is [thioredoxin]-disulfide + L-methionine + H2O = L-methionine (S)-S-oxide + [thioredoxin]-dithiol. Has an important function as a repair enzyme for proteins that have been inactivated by oxidation. Catalyzes the reversible oxidation-reduction of methionine sulfoxide in proteins to methionine. The sequence is that of Peptide methionine sulfoxide reductase MsrA 1 (msrA1) from Synechocystis sp. (strain ATCC 27184 / PCC 6803 / Kazusa).